Here is a 436-residue protein sequence, read N- to C-terminus: GTPase Der (436 aa).

EngA-type G domains follow at residues 3-168 and 177-352; these read PLIA…PESD and IRLA…QNRS. GTP is bound by residues 9–16, 56–60, 120–123, 183–190, 230–234, and 295–298; these read GRPNVGKS, DTGGY, NKAE, DTAGL, and NKWD. In terms of domain architecture, KH-like spans 353-436; it reads RKISTSALNR…VTISLRFMQK (84 aa).

Belongs to the TRAFAC class TrmE-Era-EngA-EngB-Septin-like GTPase superfamily. EngA (Der) GTPase family. In terms of assembly, associates with the 50S ribosomal subunit.

Functionally, GTPase that plays an essential role in the late steps of ribosome biogenesis. The chain is GTPase Der from Chlorobium luteolum (strain DSM 273 / BCRC 81028 / 2530) (Pelodictyon luteolum).